Reading from the N-terminus, the 321-residue chain is Methenyltetrahydromethanopterin cyclohydrolase (321 aa).

It belongs to the MCH family.

Its subcellular location is the cytoplasm. It catalyses the reaction 5,10-methenyl-5,6,7,8-tetrahydromethanopterin + H2O = N(5)-formyl-5,6,7,8-tetrahydromethanopterin + H(+). The protein operates within one-carbon metabolism; methanogenesis from CO(2); 5,10-methenyl-5,6,7,8-tetrahydromethanopterin from CO(2): step 3/3. Catalyzes the reversible interconversion of 5-formyl-H(4)MPT to methenyl-H(4)MPT(+). In Methanosarcina mazei (strain ATCC BAA-159 / DSM 3647 / Goe1 / Go1 / JCM 11833 / OCM 88) (Methanosarcina frisia), this protein is Methenyltetrahydromethanopterin cyclohydrolase.